Reading from the N-terminus, the 440-residue chain is Tetratricopeptide repeat protein 5 (440 aa).

TPR repeat units lie at residues 7 to 61, 68 to 98, 103 to 130, 136 to 174, and 179 to 216; these read EEVK…EEVV, AQVLMLTGKALNVTPDYSPKAEELLSKAVKL, VEAWNQLGEVYWKKGDVAAAHTCFSGAL, KVSLQNLSMVLRQLRTDSGDEHSRHVMDSVRQAKLAVQM, and GRSWYILGNAYLSLYFNTGQNPKISQQALSAYAQAEKV. Positions 13–24 match the Nuclear export signal motif; it reads LQKLQELVDQLY. Serine 203 is subject to Phosphoserine; by ATM. The residue at position 221 (serine 221) is a Phosphoserine; by CHEK2. The TPR 6 repeat unit spans residues 224-253; it reads PDLHLNRATLHKYEENYGEALEGFSRAAAL. Residues 285–287 are mediates interaction with 28S rRNA of ribosome-coding tubulin; sequence KTK.

As to quaternary structure, interacts with JMY and p300/EP300; the interaction occurs in the nucleus and augments the association between JMY and p300/EP300 in response to DNA damage. Interacts with PRMT5; the interaction is DNA damage-dependent and promotes PRMT5 interaction with p53/TP53 and subsequent methylation. Forms a complex with HSF1 and p300/EP300; these interactions augment chromatin-bound HSF1 and p300/EP300 histone acetyltransferase activity, resulting in enhanced heat-shock-responsive transcription. Interacts with JMY; the interaction occurs in the cytoplasm and results in the inhibition of JYM's nucleation activity. Interacts with ribosome-coding tubulin (via 60S subunit 28S rRNA and protein uL24/RPL26) and the N-terminal of nascent tubulin polypeptide (via alpha-tubulin MREC motif and beta-tubulin MREI motif); these interactions result in tubulin mRNA-targeted degradation. Interacts with ATP5F1B; the interaction occurs in the mitochondria and results in ATP production decrease. Interacts with p53/TP53; the interaction occurs in the mitochondria and results in increased apoptosis. Post-translationally, phosphorylation by ATM kinase induces nuclear accumulation while interfering with nuclear export, and phosphorylation by CHEK2 kinase enhances nuclear stability.

The protein resides in the nucleus. The protein localises to the cytoplasm. It localises to the cytoplasmic vesicle. Its subcellular location is the mitochondrion matrix. Functionally, cofactor involved in the regulation of various cellular mechanisms such as actin regulation, autophagy, chromatin regulation and DNA repair. In physiological conditions, interacts with cofactor JMY in the cytoplasm which prevents JMY's actin nucleation activity and ability to activate the Arp2/3 complex. Acts as a negative regulator of nutrient stress-induced autophagy by inhibiting JMY's interaction with MAP1LC3B, thereby preventing autophagosome formation. Involves in tubulin autoregulation by promoting its degradation in response to excess soluble tubulin. To do so, associates with the active ribosome near the ribosome exit tunnel and with nascent tubulin polypeptides early during their translation, triggering tubulin mRNA-targeted degradation. Following DNA damage, phosphorylated by DNA damage responsive protein kinases ATM and CHEK2, leading to its nuclear accumulation and stability. Nuclear TTC5/STRAP promotes the assembly of a stress-responsive p53/TP53 coactivator complex, which includes the coactivators JMY and p300, thereby increasing p53/TP53-dependent transcription and apoptosis. Also recruits arginine methyltransferase PRMT5 to p53/TP53 when DNA is damaged, allowing PRMT5 to methylate p53/TP53. In DNA stress conditions, also prevents p53/TP53 degradation by E3 ubiquitin ligase MDM2. Upon heat-shock stress, forms a chromatin-associated complex with heat-shock factor 1 HSF1 and p300/EP300 to stimulate heat-shock-responsive transcription, thereby increasing cell survival. Mitochondrial TTC5/STRAP interacts with ATP synthase subunit beta ATP5F1B which decreased ATP synthase activity and lowers mitochondrial ATP production, thereby regulating cellular respiration and mitochondrial-dependent apoptosis. Mitochondrial TTC5/STRAP also regulates p53/TP53-mediated apoptosis. This Bos taurus (Bovine) protein is Tetratricopeptide repeat protein 5 (TTC5).